The sequence spans 247 residues: Adenosylcobinamide-GDP ribazoletransferase (247 aa).

5 helical membrane-spanning segments follow: residues 34 to 54 (IVMF…IFIL), 59 to 79 (CGIP…TGGF), 113 to 133 (GGLA…ELAL), 138 to 158 (MLAA…LLMY), and 194 to 214 (VLLL…AIFI).

Belongs to the CobS family. Mg(2+) is required as a cofactor.

It localises to the cell inner membrane. The enzyme catalyses alpha-ribazole + adenosylcob(III)inamide-GDP = adenosylcob(III)alamin + GMP + H(+). It catalyses the reaction alpha-ribazole 5'-phosphate + adenosylcob(III)inamide-GDP = adenosylcob(III)alamin 5'-phosphate + GMP + H(+). It participates in cofactor biosynthesis; adenosylcobalamin biosynthesis; adenosylcobalamin from cob(II)yrinate a,c-diamide: step 7/7. Its function is as follows. Joins adenosylcobinamide-GDP and alpha-ribazole to generate adenosylcobalamin (Ado-cobalamin). Also synthesizes adenosylcobalamin 5'-phosphate from adenosylcobinamide-GDP and alpha-ribazole 5'-phosphate. The polypeptide is Adenosylcobinamide-GDP ribazoletransferase (Salmonella typhi).